The following is a 767-amino-acid chain: 5-methyltetrahydropteroyltriglutamate--homocysteine methyltransferase (767 aa).

Lysine 126 serves as a coordination point for 5-methyltetrahydropteroyltri-L-glutamate. Residues 445–447 and glutamate 498 contribute to the L-homocysteine site; that span reads IGS. L-methionine contacts are provided by residues 445–447 and glutamate 498; that span reads IGS. Residues 529–530 and tryptophan 575 each bind 5-methyltetrahydropteroyltri-L-glutamate; that span reads RC. Aspartate 613 contributes to the L-homocysteine binding site. An L-methionine-binding site is contributed by aspartate 613. Residue glutamate 619 participates in 5-methyltetrahydropteroyltri-L-glutamate binding. Residues histidine 655, cysteine 657, and glutamate 679 each contribute to the Zn(2+) site. Histidine 708 serves as the catalytic Proton donor. Cysteine 740 contacts Zn(2+).

The protein belongs to the vitamin-B12 independent methionine synthase family. Zn(2+) serves as cofactor.

The catalysed reaction is 5-methyltetrahydropteroyltri-L-glutamate + L-homocysteine = tetrahydropteroyltri-L-glutamate + L-methionine. The protein operates within amino-acid biosynthesis; L-methionine biosynthesis via de novo pathway; L-methionine from L-homocysteine (MetE route): step 1/1. Its function is as follows. Catalyzes the transfer of a methyl group from 5-methyltetrahydrofolate to homocysteine resulting in methionine formation. The polypeptide is 5-methyltetrahydropteroyltriglutamate--homocysteine methyltransferase (Psychromonas ingrahamii (strain DSM 17664 / CCUG 51855 / 37)).